Reading from the N-terminus, the 833-residue chain is MTFYDHTAIEPKWQAFWADNHTFKTGTDASKPKFYALDMFPYPSGAGLHVGHPEGYTATDILSRFKRAQGHNILHPMGWDAFGLPAEQYAMDTGNDPAEFTAENIANFKRQINALGFSYDWDREVNTTDPNYYKWTQWIFTKLYEKGLAYEAEVPVNWVEELGTAIANEEVLPDGTSERGGYPVVRKPMRQWMLKITAYAERLLEDLEEVDWPESIKDMQRNWIGKSTGANVTFKVKDTDKDFTVFTTRPDTLFGATYAVLAPEHALVDAITTADQAEAVAKYKRQASLKSDLARTDLAKEKTGVWTGAYAINPVNGNEMPVWIADYVLASYGTGAIMAVPAHDERDWEFAKQFKLDIIPVLEGGNVEEAAFTEDGLHINSGFLDGLDKASAIAKMVEWLEAEGVGNEKVTYRLRDWLFSRQRYWGEPIPIIHWEDGTSTAVPESELPLVLPVTKDIRPSGTGESPLANVTDWLEVTREDGVKGRRETNTMPQWAGSSWYYLRYIDPHNTEKLADEELLKQWLPVDIYVGGAEHAVLHLLYARFWHKVLYDLGVVPTKEPFQKLFNQGMILGTSYRDSRGALVATDKVEKRDGSFFHVETGEELEQAPAKMSKSLKNVVNPDDVVEQYGADTLRVYEMFMGPLDASIAWSEEGLEGSRKFLDRVYRLITTKEITEENSGALDKVYNETVKAVTEQVDQMKFNTAIAQLMVFVNAANKEDKLFSDYAKGFVQLIAPFAPHLGEELWQALTASGESISYVPWPSYDESKLVENDVEIVVQIKGKVKAKLVVAKDLSREELQEVALANEKVQAEIAGKDIIKVIAVPNKLVNIVIK.

Positions 41-52 (PYPSGAGLHVGH) match the 'HIGH' region motif. Residues 610–614 (KMSKS) carry the 'KMSKS' region motif. ATP is bound at residue Lys613.

The protein belongs to the class-I aminoacyl-tRNA synthetase family.

It localises to the cytoplasm. It catalyses the reaction tRNA(Leu) + L-leucine + ATP = L-leucyl-tRNA(Leu) + AMP + diphosphate. In Streptococcus pyogenes serotype M1, this protein is Leucine--tRNA ligase.